The primary structure comprises 593 residues: Metal-response element-binding transcription factor 2 (593 aa).

Residues 1 to 24 are disordered; the sequence is MRDSTGAGNSLVHKRSPLRRNQKT. A compositionally biased stretch (basic residues) spans 12–22; the sequence is VHKRSPLRRNQ. At Thr-24 the chain carries Phosphothreonine. The region spanning 44–101 is the Tudor domain; the sequence is CKFEEGQDVLARWSDGLFYLGTIKKINILKQSCFIIFEDSSKSWVLWKDIQTGATGSG. 2 consecutive PHD-type zinc fingers follow at residues 102–157 and 201–255; these read EMVC…CVFA and QCYC…CSSG. Disordered stretches follow at residues 357-410 and 444-486; these read VAFK…GPYT and GIAH…TRTG. Lys-360 is covalently cross-linked (Glycyl lysine isopeptide (Lys-Gly) (interchain with G-Cter in SUMO2)). Residues 360 to 374 show a composition bias toward basic and acidic residues; that stretch reads KAEKEPEGTSHEFKI. A compositionally biased stretch (polar residues) spans 447–470; it reads HSSNTSDVDLTGASSANETTSASI. Ser-452 is subject to Phosphoserine. A Glycyl lysine isopeptide (Lys-Gly) (interchain with G-Cter in SUMO2) cross-link involves residue Lys-522.

It belongs to the Polycomblike family. As to quaternary structure, associates with the PRC2 complex, which consists of the core components EED, EZH1 or EZH2, SUZ12, and RBBP4, and various combinations of accessory subunits including AEBP2, JARID2, PHF19, MTF2 and EPOP. Forms a dimeric PRC2.1 (class 1, PRC-PCL) complex consisting of at least SUZ12, RBBP4, and PHF19 or MTF2; PHF19 and MTF2 stabilize the dimeric structure which enhances PRC2 interaction with chromatin.

It is found in the nucleus. Functionally, polycomb group (PcG) protein that specifically binds histone H3 trimethylated at 'Lys-36' (H3K36me3) and recruits the PRC2 complex, thus enhancing PRC2 H3K27me3 methylation activity. Regulates the transcriptional networks during embryonic stem cell self-renewal and differentiation. Promotes recruitment of the PRC2 complex to the inactive X chromosome in differentiating XX ES cells and PRC2 recruitment to target genes in undifferentiated ES cells. Required to repress Hox genes by enhancing H3K27me3 methylation of the PRC2 complex. In some conditions may act as an inhibitor of PRC2 activity: able to activate the CDKN2A gene and promote cellular senescence by suppressing the catalytic activity of the PRC2 complex locally. Binds to the metal-regulating-element (MRE) of MT1A gene promoter. The sequence is that of Metal-response element-binding transcription factor 2 (Mtf2) from Mus musculus (Mouse).